The sequence spans 509 residues: Pituitary homeobox homolog Ptx1 (509 aa).

Low complexity predominate over residues 70 to 98 (NGAGSAGSAESATTTSTALSSGSTGSSTV). Disordered stretches follow at residues 70-125 (NGAG…SSVS), 148-171 (QDLVGGYSQHPHHTVVPPHTPKHE), and 204-273 (LNNF…HFTS). Residues 227-242 (RSVNETTIKTENISSS) are compositionally biased toward polar residues. Positions 243 to 258 (GHDEPMTTSGEEPKND) are enriched in basic and acidic residues. Positions 259 to 269 (KKNKRQRRQRT) are enriched in basic residues. A DNA-binding region (homeobox) is located at residues 262–322 (KRQRRQRTHF…KNRRAKWRKR (61 aa)). The OAR motif lies at 460-473 (SSIATLRLKAKQHA). A Nuclear localization signal motif is present at residues 464-470 (TLRLKAK).

The protein belongs to the paired homeobox family. Bicoid subfamily.

The protein localises to the nucleus. Appears to control physiological cell functions rather than pattern formation during embryogenesis. The protein is Pituitary homeobox homolog Ptx1 (Ptx1) of Drosophila melanogaster (Fruit fly).